The chain runs to 299 residues: 4-hydroxybenzoate octaprenyltransferase (299 aa).

The next 7 helical transmembrane spans lie at 34–54, 57–77, 108–128, 163–183, 221–241, 245–265, and 277–297; these read IGSL…ADGL, LWTL…GCVI, LWVF…LNWL, WGIP…GWLL, FDLV…ALVD, DLGA…AYEF, and FRAF…IAVA.

This sequence belongs to the UbiA prenyltransferase family. Requires Mg(2+) as cofactor.

It is found in the cell inner membrane. It catalyses the reaction all-trans-octaprenyl diphosphate + 4-hydroxybenzoate = 4-hydroxy-3-(all-trans-octaprenyl)benzoate + diphosphate. It participates in cofactor biosynthesis; ubiquinone biosynthesis. Its function is as follows. Catalyzes the prenylation of para-hydroxybenzoate (PHB) with an all-trans polyprenyl group. Mediates the second step in the final reaction sequence of ubiquinone-8 (UQ-8) biosynthesis, which is the condensation of the polyisoprenoid side chain with PHB, generating the first membrane-bound Q intermediate 3-octaprenyl-4-hydroxybenzoate. This is 4-hydroxybenzoate octaprenyltransferase from Xanthomonas oryzae pv. oryzae (strain MAFF 311018).